Consider the following 176-residue polypeptide: Insulin-like growth factor 1 (176 aa).

Residues 45-73 (GPETLCGAELVDTLQFVCGERGFYFSKPT) are b. Disulfide bonds link Cys-50–Cys-92, Cys-62–Cys-105, and Cys-91–Cys-96. The tract at residues 74–85 (GYGPSSRRSHNR) is c. The segment at 86-106 (GIVDECCFQSCELRRLEMYCA) is a. Residues 107-114 (PVKSGKAA) are d. Positions 115-176 (RSVRAQRHTD…GNTGGRNYRM (62 aa)) are cleaved as a propeptide — e peptide. Residues 115 to 176 (RSVRAQRHTD…GNTGGRNYRM (62 aa)) are disordered. The segment covering 140-161 (RGTERRTAQHPDKTKPKKEVHQ) has biased composition (basic and acidic residues).

This sequence belongs to the insulin family.

It is found in the secreted. Functionally, the insulin-like growth factors, isolated from plasma, are structurally and functionally related to insulin but have a much higher growth-promoting activity. Acts as a ligand for IGF1R. Binds to the alpha subunit of IGF1R, leading to the activation of the intrinsic tyrosine kinase activity which autophosphorylates tyrosine residues in the beta subunit thus initiatiating a cascade of down-stream signaling events leading to activation of the PI3K-AKT/PKB and the Ras-MAPK pathways. Binds to integrins. Its binding to integrins and subsequent ternary complex formation with integrins and IGFR1 are essential for IGF1 signaling. The chain is Insulin-like growth factor 1 from Oncorhynchus mykiss (Rainbow trout).